A 382-amino-acid polypeptide reads, in one-letter code: MKLTEVIEGKARLVIPDPSEFSREGKFDPAWSPVFYNPRMVFNRDVSVLAVSVISPPSVLDAMSATGVRGIRYVKESGVKGEVLFNDKNPVSVELISKNLELNGITGKVLRSDANSLMHQVKVGYTDLDPFGSPAPYLFSAISSLRRKGVLGVTATDLSALEGKSRTSSKRKYGVQGSRLSYSKEAGLRVLLGKIVKEASVQEKGIRPLMGFYHDYYYRLFVKMEDGAKRADRSLESLGTLYECDRCGYSFMSSDECERKCPVCGGELKYYGPAWIGEFNDLEFLKEMKNRLTEFSYLSNSVKISELLEYLERENRFGPYYRVDVLASRLKVNMPPMNSLLGCLGDAVRTHFDPRGFKSFREFSEILECVKGSSATYETSGR.

A Trm1 methyltransferase domain is found at 4 to 370; the sequence is TEVIEGKARL…REFSEILECV (367 aa). S-adenosyl-L-methionine contacts are provided by Arg44, Arg69, Asp87, Asp113, and Ala114. Positions 244, 247, 261, and 264 each coordinate Zn(2+).

Belongs to the class I-like SAM-binding methyltransferase superfamily. Trm1 family.

It carries out the reaction guanosine(26) in tRNA + 2 S-adenosyl-L-methionine = N(2)-dimethylguanosine(26) in tRNA + 2 S-adenosyl-L-homocysteine + 2 H(+). Functionally, dimethylates a single guanine residue at position 26 of a number of tRNAs using S-adenosyl-L-methionine as donor of the methyl groups. In Metallosphaera sedula (strain ATCC 51363 / DSM 5348 / JCM 9185 / NBRC 15509 / TH2), this protein is tRNA (guanine(26)-N(2))-dimethyltransferase.